A 462-amino-acid polypeptide reads, in one-letter code: Histidine--tRNA ligase (462 aa).

This sequence belongs to the class-II aminoacyl-tRNA synthetase family. In terms of assembly, homodimer.

It is found in the cytoplasm. The enzyme catalyses tRNA(His) + L-histidine + ATP = L-histidyl-tRNA(His) + AMP + diphosphate + H(+). In Trichormus variabilis (strain ATCC 29413 / PCC 7937) (Anabaena variabilis), this protein is Histidine--tRNA ligase.